The following is a 314-amino-acid chain: Tetraacyldisaccharide 4'-kinase (314 aa).

Position 54–61 (54–61 (YIGGTGKT)) interacts with ATP.

This sequence belongs to the LpxK family.

It catalyses the reaction a lipid A disaccharide + ATP = a lipid IVA + ADP + H(+). It participates in glycolipid biosynthesis; lipid IV(A) biosynthesis; lipid IV(A) from (3R)-3-hydroxytetradecanoyl-[acyl-carrier-protein] and UDP-N-acetyl-alpha-D-glucosamine: step 6/6. Functionally, transfers the gamma-phosphate of ATP to the 4'-position of a tetraacyldisaccharide 1-phosphate intermediate (termed DS-1-P) to form tetraacyldisaccharide 1,4'-bis-phosphate (lipid IVA). This is Tetraacyldisaccharide 4'-kinase from Pelagibacter ubique (strain HTCC1062).